We begin with the raw amino-acid sequence, 398 residues long: Phosphoglycerate kinase (398 aa).

Substrate contacts are provided by residues 21-23 (DFN), Arg-36, 59-62 (HFGR), Arg-117, and Arg-150. Residues Lys-200, Glu-321, and 351–354 (GGDS) contribute to the ATP site.

It belongs to the phosphoglycerate kinase family. In terms of assembly, monomer.

The protein localises to the cytoplasm. The catalysed reaction is (2R)-3-phosphoglycerate + ATP = (2R)-3-phospho-glyceroyl phosphate + ADP. The protein operates within carbohydrate degradation; glycolysis; pyruvate from D-glyceraldehyde 3-phosphate: step 2/5. This chain is Phosphoglycerate kinase, found in Wolbachia pipientis wMel.